We begin with the raw amino-acid sequence, 102 residues long: Protein iss (102 aa).

Its function is as follows. Increases serum survival and confers group II surface exclusion. The polypeptide is Protein iss (iss) (Escherichia coli).